A 290-amino-acid chain; its full sequence is Arylamine N-acetyltransferase 2 (290 aa).

The active-site Acyl-thioester intermediate is Cys68. Positions 103 and 104 each coordinate CoA. A substrate-binding site is contributed by 106-107 (IH). Catalysis depends on residues His107 and Asp122. Residue Tyr208 coordinates CoA.

The protein belongs to the arylamine N-acetyltransferase family.

It localises to the cytoplasm. It catalyses the reaction an arylamine + acetyl-CoA = an N-acetylarylamine + CoA. The catalysed reaction is an N-hydroxyarylamine + acetyl-CoA = an N-acetoxyarylamine + CoA. Catalyzes the N- or O-acetylation of various arylamine and heterocyclic amine substrates. Participates in the detoxification of a plethora of hydrazine and arylamine drugs. This Rattus norvegicus (Rat) protein is Arylamine N-acetyltransferase 2 (Nat2).